Reading from the N-terminus, the 141-residue chain is Endoribonuclease YbeY (141 aa).

Zn(2+) contacts are provided by H105, H109, and D115.

The protein belongs to the endoribonuclease YbeY family. Zn(2+) is required as a cofactor.

It is found in the cytoplasm. Functionally, single strand-specific metallo-endoribonuclease involved in late-stage 70S ribosome quality control and in maturation of the 3' terminus of the 16S rRNA. The sequence is that of Endoribonuclease YbeY from Chlorobaculum parvum (strain DSM 263 / NCIMB 8327) (Chlorobium vibrioforme subsp. thiosulfatophilum).